The sequence spans 559 residues: Actin-binding protein WASF1 (559 aa).

Disordered stretches follow at residues 169–202, 307–400, and 412–492; these read TEDK…DRRR, RPQS…SPPV, and VHPL…STLP. The span at 182–202 shows a compositional bias: basic and acidic residues; it reads KNLDRPHEPEKVPRAPHDRRR. Residues 322-332 are compositionally biased toward pro residues; that stretch reads PTPPPPPPPLP. The span at 333–346 shows a compositional bias: low complexity; the sequence is SALSTSSLRASMTS. Arg-341 is subject to Asymmetric dimethylarginine; alternate. Omega-N-methylarginine; alternate is present on Arg-341. 4 stretches are compositionally biased toward pro residues: residues 347 to 374, 384 to 399, 423 to 437, and 458 to 477; these read TPPP…PPAP, PAPP…PSPP, LPPP…PPGI, and TPSP…PPSQ. Residue Ser-489 is modified to Phosphoserine. Positions 497–514 constitute a WH2 domain; it reads ARSVLLEAIRKGIQLRKV.

Belongs to the SCAR/WAVE family. As to quaternary structure, component of the WAVE1 complex composed of ABI2, CYFIP1 or CYFIP2, BRK1, NCKAP1 and WASF1/WAVE1. Within the complex, a heterodimer containing NCKAP1 and CYFIP1 interacts with a heterotrimer formed by WAVE1, ABI2 and BRK1. CYFIP2 binds to activated RAC1 which causes the complex to dissociate, releasing activated WASF1. The complex can also be activated by NCK1. Binds actin and the Arp2/3 complex. Interacts with BAIAP2. Interacts with SHANK3; the interaction mediates the association of SHANK3 with the WAVE1 complex. Interacts with ABI1 (via N-terminus). Interacts with SORBS2; this interaction greatly enhances phosphorylation by ABL1 and dephosphorylation by PTPN12 and might mediate partial to focal adhesion sites. As to expression, expressed in hippocampal neurons (at protein level).

The protein localises to the cytoplasm. The protein resides in the cytoskeleton. It is found in the synapse. Its subcellular location is the cell junction. It localises to the focal adhesion. In terms of biological role, downstream effector molecule involved in the transmission of signals from tyrosine kinase receptors and small GTPases to the actin cytoskeleton. Promotes formation of actin filaments. Part of the WAVE complex that regulates lamellipodia formation. The WAVE complex regulates actin filament reorganization via its interaction with the Arp2/3 complex. As component of the WAVE1 complex, required for BDNF-NTRK2 endocytic trafficking and signaling from early endosomes. Also involved in the regulation of mitochondrial dynamics. The sequence is that of Actin-binding protein WASF1 (Wasf1) from Rattus norvegicus (Rat).